A 628-amino-acid polypeptide reads, in one-letter code: Very-long-chain aldehyde decarbonylase GL1-2 (628 aa).

The next 5 helical transmembrane spans lie at 37 to 57 (GAAPVGSWWLHLLLLFAARGL), 131 to 151 (GWAIALLLHVLVAEPLFYWAH), 191 to 211 (VVIGVPLAGAFLMGVGSVGLV), 299 to 319 (DFVFLAHVVDIMASMHVPFVL), and 331 to 351 (FVLLPFWPVAFGFMLLMWCCS). In terms of domain architecture, Fatty acid hydroxylase spans 137-277 (LLHVLVAEPL…MPIFDLLGGT (141 aa)).

It belongs to the sterol desaturase family. In terms of assembly, homodimer. In terms of tissue distribution, expressed in germinating seeds, radicals and leaves.

Its subcellular location is the endoplasmic reticulum membrane. It carries out the reaction a long-chain fatty aldehyde + 2 NADPH + O2 + H(+) = a long-chain alkane + formate + 2 NADP(+) + H2O. Functionally, aldehyde decarbonylase involved in the conversion of aldehydes to alkanes. Core component of a very-long-chain alkane synthesis complex. Required for the formation of wax layers conferring cuticular permeability and drought tolerance. This chain is Very-long-chain aldehyde decarbonylase GL1-2, found in Oryza sativa subsp. japonica (Rice).